A 476-amino-acid chain; its full sequence is Aspartyl/glutamyl-tRNA(Asn/Gln) amidotransferase subunit B (476 aa).

It belongs to the GatB/GatE family. GatB subfamily. Heterotrimer of A, B and C subunits.

The catalysed reaction is L-glutamyl-tRNA(Gln) + L-glutamine + ATP + H2O = L-glutaminyl-tRNA(Gln) + L-glutamate + ADP + phosphate + H(+). It catalyses the reaction L-aspartyl-tRNA(Asn) + L-glutamine + ATP + H2O = L-asparaginyl-tRNA(Asn) + L-glutamate + ADP + phosphate + 2 H(+). In terms of biological role, allows the formation of correctly charged Asn-tRNA(Asn) or Gln-tRNA(Gln) through the transamidation of misacylated Asp-tRNA(Asn) or Glu-tRNA(Gln) in organisms which lack either or both of asparaginyl-tRNA or glutaminyl-tRNA synthetases. The reaction takes place in the presence of glutamine and ATP through an activated phospho-Asp-tRNA(Asn) or phospho-Glu-tRNA(Gln). The sequence is that of Aspartyl/glutamyl-tRNA(Asn/Gln) amidotransferase subunit B from Bacillus licheniformis (strain ATCC 14580 / DSM 13 / JCM 2505 / CCUG 7422 / NBRC 12200 / NCIMB 9375 / NCTC 10341 / NRRL NRS-1264 / Gibson 46).